We begin with the raw amino-acid sequence, 647 residues long: 2',3'-cyclic-nucleotide 2'-phosphodiesterase/3'-nucleotidase (647 aa).

A signal peptide spans Met-1–Ala-19. Positions 31, 33, 76, 116, 225, 257, and 259 each coordinate a divalent metal cation. Residues Tyr-440 and Tyr-544–Lys-550 contribute to the substrate site.

The protein belongs to the 5'-nucleotidase family. A divalent metal cation serves as cofactor.

The protein localises to the periplasm. The enzyme catalyses a nucleoside 2',3'-cyclic phosphate + H2O = a nucleoside 3'-phosphate + H(+). It catalyses the reaction a ribonucleoside 3'-phosphate + H2O = a ribonucleoside + phosphate. Its function is as follows. This bifunctional enzyme catalyzes two consecutive reactions during ribonucleic acid degradation. Converts a 2',3'-cyclic nucleotide to a 3'-nucleotide and then the 3'-nucleotide to the corresponding nucleoside and phosphate. The sequence is that of 2',3'-cyclic-nucleotide 2'-phosphodiesterase/3'-nucleotidase (cpdB) from Salmonella typhimurium (strain LT2 / SGSC1412 / ATCC 700720).